Here is a 50-residue protein sequence, read N- to C-terminus: Large ribosomal subunit protein bL32A (50 aa).

A compositionally biased stretch (basic residues) spans M1–Q19. Positions M1–K21 are disordered.

It belongs to the bacterial ribosomal protein bL32 family.

The sequence is that of Large ribosomal subunit protein bL32A from Saccharopolyspora erythraea (strain ATCC 11635 / DSM 40517 / JCM 4748 / NBRC 13426 / NCIMB 8594 / NRRL 2338).